A 120-amino-acid chain; its full sequence is Flagellar protein FliT (120 aa).

The required for homodimerization stretch occupies residues 1–50 (MENLSPLLIEYQGLLKLIRNIKAMALNGLWDDVVEQEIVYIQSIERISQI). Residues 60–98 (VQLQFRQLLQDILDTESQVKELLQNRMQELAVLIQQSQN) are fliD binding.

It belongs to the FliT family. In terms of assembly, homodimer. Interacts with FliD and FlhC.

It localises to the cytoplasm. The protein resides in the cytosol. Its function is as follows. Dual-function protein that regulates the transcription of class 2 flagellar operons and that also acts as an export chaperone for the filament-capping protein FliD. As a transcriptional regulator, acts as an anti-FlhDC factor; it directly binds FlhC, thus inhibiting the binding of the FlhC/FlhD complex to class 2 promoters, resulting in decreased expression of class 2 flagellar operons. As a chaperone, effects FliD transition to the membrane by preventing its premature polymerization, and by directing it to the export apparatus. The chain is Flagellar protein FliT from Dickeya chrysanthemi (Pectobacterium chrysanthemi).